The chain runs to 332 residues: uncharacterized protein (332 aa).

Residues 1-32 (MSRDRGARGLRKYGRFALATGAATALSLTASG) form the signal peptide. C33 carries N-palmitoyl cysteine lipidation. The S-diacylglycerol cysteine moiety is linked to residue C33.

The protein localises to the cell membrane. This is an uncharacterized protein from Streptomyces avermitilis (strain ATCC 31267 / DSM 46492 / JCM 5070 / NBRC 14893 / NCIMB 12804 / NRRL 8165 / MA-4680).